A 628-amino-acid chain; its full sequence is Glutamyl-tRNA(Gln) amidotransferase subunit E (628 aa).

This sequence belongs to the GatB/GatE family. GatE subfamily. As to quaternary structure, heterodimer of GatD and GatE.

The enzyme catalyses L-glutamyl-tRNA(Gln) + L-glutamine + ATP + H2O = L-glutaminyl-tRNA(Gln) + L-glutamate + ADP + phosphate + H(+). In terms of biological role, allows the formation of correctly charged Gln-tRNA(Gln) through the transamidation of misacylated Glu-tRNA(Gln) in organisms which lack glutaminyl-tRNA synthetase. The reaction takes place in the presence of glutamine and ATP through an activated gamma-phospho-Glu-tRNA(Gln). The GatDE system is specific for glutamate and does not act on aspartate. In Thermococcus gammatolerans (strain DSM 15229 / JCM 11827 / EJ3), this protein is Glutamyl-tRNA(Gln) amidotransferase subunit E.